A 518-amino-acid polypeptide reads, in one-letter code: Cytochrome P450 736A117 (518 aa).

Asn-12 is a glycosylation site (N-linked (GlcNAc...) asparagine). A helical transmembrane segment spans residues 17 to 37 (FLQPLAFTLLAIFLVLLYTWY). Residues Asn-185, Asn-275, and Asn-356 are each glycosylated (N-linked (GlcNAc...) asparagine). A heme-binding site is contributed by Cys-460.

It belongs to the cytochrome P450 family. The cofactor is heme. Expressed at similar levels in fruit kernel, seedlings, leaves, stems and buds.

Its subcellular location is the membrane. This Prunus mume (Japanese apricot) protein is Cytochrome P450 736A117.